The sequence spans 81 residues: ATP synthase subunit c, chloroplastic (81 aa).

A run of 2 helical transmembrane segments spans residues 3-23 (PLVFAASVIAAGLAVGLASIG) and 57-77 (LAFMEALTIYGLVVALALLFA).

Belongs to the ATPase C chain family. As to quaternary structure, F-type ATPases have 2 components, F(1) - the catalytic core - and F(0) - the membrane proton channel. F(1) has five subunits: alpha(3), beta(3), gamma(1), delta(1), epsilon(1). F(0) has four main subunits: a(1), b(1), b'(1) and c(10-14). The alpha and beta chains form an alternating ring which encloses part of the gamma chain. F(1) is attached to F(0) by a central stalk formed by the gamma and epsilon chains, while a peripheral stalk is formed by the delta, b and b' chains.

Its subcellular location is the plastid. It localises to the chloroplast thylakoid membrane. F(1)F(0) ATP synthase produces ATP from ADP in the presence of a proton or sodium gradient. F-type ATPases consist of two structural domains, F(1) containing the extramembraneous catalytic core and F(0) containing the membrane proton channel, linked together by a central stalk and a peripheral stalk. During catalysis, ATP synthesis in the catalytic domain of F(1) is coupled via a rotary mechanism of the central stalk subunits to proton translocation. Its function is as follows. Key component of the F(0) channel; it plays a direct role in translocation across the membrane. A homomeric c-ring of between 10-14 subunits forms the central stalk rotor element with the F(1) delta and epsilon subunits. This is ATP synthase subunit c, chloroplastic from Atropa belladonna (Belladonna).